The chain runs to 213 residues: Endoplasmic reticulum vesicle protein 25 (213 aa).

Positions 1–20 (MILRIPSLLYLFTLLTAVYA) are cleaved as a signal peptide. The Lumenal portion of the chain corresponds to 21–181 (VKFDLTSDRN…TNESTNQRVK (161 aa)). One can recognise a GOLD domain in the interval 33 to 122 (PKCIWNFASA…VRSVELDVDI (90 aa)). Residues 182 to 202 (VFSVLIICCTIGLGVWQLLHL) form a helical membrane-spanning segment. Residues 203-213 (RSFFKRKYLID) lie on the Cytoplasmic side of the membrane.

This sequence belongs to the EMP24/GP25L family.

It is found in the endoplasmic reticulum membrane. Its subcellular location is the golgi apparatus membrane. Functionally, constituent of COPII-coated endoplasmic reticulum-derived transport vesicles. Required for efficient transport of a subset of secretory proteins to the Golgi. Facilitates retrograde transport from the Golgi to the endoplasmic reticulum. The sequence is that of Endoplasmic reticulum vesicle protein 25 (ERV25) from Cryptococcus neoformans var. neoformans serotype D (strain JEC21 / ATCC MYA-565) (Filobasidiella neoformans).